We begin with the raw amino-acid sequence, 144 residues long: Phospholipase A2, membrane associated (144 aa).

The signal sequence occupies residues 1 to 20 (MKTLLLLAVIMIFGLLQAHG). Intrachain disulfides connect Cys-46–Cys-137, Cys-48–Cys-64, Cys-63–Cys-117, Cys-69–Cys-144, Cys-70–Cys-110, Cys-79–Cys-103, and Cys-97–Cys-108. His-47, Gly-49, and Gly-51 together coordinate Ca(2+). The active site involves His-67. Asp-68 is a Ca(2+) binding site. Asp-111 is an active-site residue.

The protein belongs to the phospholipase A2 family. Requires Ca(2+) as cofactor. As to expression, expressed in various tissues including heart, kidney, liver, lung, pancreas, placenta, skeletal muscle, prostate, ovary, colon and small intestine. Not detected in lymphoid organs and brain. Expressed in platelets (at protein level).

Its subcellular location is the secreted. The protein localises to the cell membrane. It is found in the mitochondrion outer membrane. It catalyses the reaction a 1,2-diacyl-sn-glycero-3-phosphoethanolamine + H2O = a 1-acyl-sn-glycero-3-phosphoethanolamine + a fatty acid + H(+). The catalysed reaction is 1-hexadecanoyl-2-(9Z-octadecenoyl)-sn-glycero-3-phosphoethanolamine + H2O = 1-hexadecanoyl-sn-glycero-3-phosphoethanolamine + (9Z)-octadecenoate + H(+). The enzyme catalyses 1-hexadecanoyl-2-(9Z,12Z-octadecadienoyl)-sn-glycero-3-phosphoethanolamine + H2O = 1-hexadecanoyl-sn-glycero-3-phosphoethanolamine + (9Z,12Z)-octadecadienoate + H(+). It carries out the reaction 1-hexadecanoyl-2-(5Z,8Z,11Z,14Z-eicosatetraenoyl)-sn-glycero-3-phosphoethanolamine + H2O = 1-hexadecanoyl-sn-glycero-3-phosphoethanolamine + (5Z,8Z,11Z,14Z)-eicosatetraenoate + H(+). It catalyses the reaction N-hexadecanoyl-1,2-di-(9Z-octadecenoyl)-sn-glycero-3-phosphoethanolamine + H2O = N-hexadecanoyl-1-(9Z-octadecenoyl)-sn-glycero-3-phosphoethanolamine + (9Z)-octadecenoate + H(+). The catalysed reaction is 1,2-dihexadecanoyl-sn-glycero-3-phospho-(1'-sn-glycerol) + H2O = 1-hexadecanoyl-sn-glycero-3-phospho-(1'-sn-glycerol) + hexadecanoate + H(+). The enzyme catalyses 1-hexadecanoyl-2-(9Z-octadecenoyl)-sn-glycero-3-phosphoglycerol + H2O = 1-hexadecanoyl-sn-glycero-3-phosphoglycerol + (9Z)-octadecenoate + H(+). It carries out the reaction 1-hexadecanoyl-2-(9Z-octadecenoyl)-sn-glycero-3-phospho-(1'-sn-glycerol) + H2O = 1-hexadecanoyl-sn-glycero-3-phospho-(1'-sn-glycerol) + (9Z)-octadecenoate + H(+). It catalyses the reaction a 1,2-diacyl-sn-glycero-3-phosphocholine + H2O = a 1-acyl-sn-glycero-3-phosphocholine + a fatty acid + H(+). The catalysed reaction is 1,2-dihexadecanoyl-sn-glycero-3-phosphocholine + H2O = 1-hexadecanoyl-sn-glycero-3-phosphocholine + hexadecanoate + H(+). The enzyme catalyses 1-hexadecanoyl-2-(9Z-octadecenoyl)-sn-glycero-3-phosphocholine + H2O = 1-hexadecanoyl-sn-glycero-3-phosphocholine + (9Z)-octadecenoate + H(+). It carries out the reaction 1-hexadecanoyl-2-(9Z,12Z-octadecadienoyl)-sn-glycero-3-phosphocholine + H2O = (9Z,12Z)-octadecadienoate + 1-hexadecanoyl-sn-glycero-3-phosphocholine + H(+). It catalyses the reaction 1-hexadecanoyl-2-(4Z,7Z,10Z,13Z,16Z,19Z-docosahexaenoyl)-sn-glycero-3-phosphocholine + H2O = (4Z,7Z,10Z,13Z,16Z,19Z)-docosahexaenoate + 1-hexadecanoyl-sn-glycero-3-phosphocholine + H(+). Its function is as follows. Secretory calcium-dependent phospholipase A2 that primarily targets extracellular phospholipids with implications in host antimicrobial defense, inflammatory response and tissue regeneration. Hydrolyzes the ester bond of the fatty acyl group attached at sn-2 position of phospholipids (phospholipase A2 activity) with preference for phosphatidylethanolamines and phosphatidylglycerols over phosphatidylcholines. Contributes to lipid remodeling of cellular membranes and generation of lipid mediators involved in pathogen clearance. Displays bactericidal activity against Gram-positive bacteria by directly hydrolyzing phospholipids of the bacterial membrane. Upon sterile inflammation, targets membrane phospholipids of extracellular mitochondria released from activated platelets, generating free unsaturated fatty acids such as arachidonate that is used by neighboring leukocytes to synthesize inflammatory eicosanoids such as leukotrienes. Simultaneously, by compromising mitochondrial membrane integrity, promotes the release in circulation of potent damage-associated molecular pattern molecules that activate the innate immune response. Plays a stem cell regulator role in the intestinal crypt. Within intracellular compartment mediates Paneth cell differentiation and its stem cell supporting functions by inhibiting Wnt signaling pathway in intestinal stem cell (ICS). Secreted in the intestinal lumen upon inflammation, acts in an autocrine way and promotes prostaglandin E2 synthesis that stimulates Wnt signaling pathway in ICS cells and tissue regeneration. May play a role in the biosynthesis of N-acyl ethanolamines that regulate energy metabolism and inflammation. Hydrolyzes N-acyl phosphatidylethanolamines to N-acyl lysophosphatidylethanolamines, which are further cleaved by a lysophospholipase D to release N-acyl ethanolamines. Independent of its catalytic activity, acts as a ligand for integrins. Binds to and activates integrins ITGAV:ITGB3, ITGA4:ITGB1 and ITGA5:ITGB1. Binds to a site (site 2) which is distinct from the classical ligand-binding site (site 1) and induces integrin conformational changes and enhanced ligand binding to site 1. Induces cell proliferation in an integrin-dependent manner. The sequence is that of Phospholipase A2, membrane associated (PLA2G2A) from Homo sapiens (Human).